The primary structure comprises 344 residues: Uroporphyrinogen decarboxylase (344 aa).

Substrate is bound by residues 29 to 33 (RQAGR), Asp-79, Tyr-153, Ser-208, and His-324.

It belongs to the uroporphyrinogen decarboxylase family. In terms of assembly, homodimer.

Its subcellular location is the cytoplasm. It catalyses the reaction uroporphyrinogen III + 4 H(+) = coproporphyrinogen III + 4 CO2. It participates in porphyrin-containing compound metabolism; protoporphyrin-IX biosynthesis; coproporphyrinogen-III from 5-aminolevulinate: step 4/4. Its function is as follows. Catalyzes the decarboxylation of four acetate groups of uroporphyrinogen-III to yield coproporphyrinogen-III. This chain is Uroporphyrinogen decarboxylase, found in Rhizorhabdus wittichii (strain DSM 6014 / CCUG 31198 / JCM 15750 / NBRC 105917 / EY 4224 / RW1) (Sphingomonas wittichii).